The primary structure comprises 147 residues: Hemoglobin subunit epsilon (147 aa).

A Globin domain is found at 3 to 147 (HFTAEEKNAI…VANALAHKYH (145 aa)). Residue Ser51 is modified to Phosphoserine. Heme b contacts are provided by His64 and His93.

This sequence belongs to the globin family. As to quaternary structure, heterotetramer of two alpha chains and two epsilon chains in early embryonic hemoglobin Gower-2; two zeta chains and two epsilon chains in early embryonic hemoglobin Gower-1. Red blood cells.

In terms of biological role, the epsilon chain is a beta-type chain of early mammalian embryonic hemoglobin. The protein is Hemoglobin subunit epsilon (HBE1) of Sminthopsis crassicaudata (Fat-tailed dunnart).